The sequence spans 284 residues: 2-dehydro-3-deoxyphosphooctonate aldolase (284 aa).

Belongs to the KdsA family.

It is found in the cytoplasm. The enzyme catalyses D-arabinose 5-phosphate + phosphoenolpyruvate + H2O = 3-deoxy-alpha-D-manno-2-octulosonate-8-phosphate + phosphate. Its pathway is carbohydrate biosynthesis; 3-deoxy-D-manno-octulosonate biosynthesis; 3-deoxy-D-manno-octulosonate from D-ribulose 5-phosphate: step 2/3. The protein operates within bacterial outer membrane biogenesis; lipopolysaccharide biosynthesis. The sequence is that of 2-dehydro-3-deoxyphosphooctonate aldolase from Sodalis glossinidius (strain morsitans).